The primary structure comprises 249 residues: tRNA (guanine-N(1)-)-methyltransferase (249 aa).

S-adenosyl-L-methionine-binding positions include Gly113 and 133-138 (LGDFVL).

Belongs to the RNA methyltransferase TrmD family. In terms of assembly, homodimer.

The protein resides in the cytoplasm. The enzyme catalyses guanosine(37) in tRNA + S-adenosyl-L-methionine = N(1)-methylguanosine(37) in tRNA + S-adenosyl-L-homocysteine + H(+). In terms of biological role, specifically methylates guanosine-37 in various tRNAs. The protein is tRNA (guanine-N(1)-)-methyltransferase of Leptothrix cholodnii (strain ATCC 51168 / LMG 8142 / SP-6) (Leptothrix discophora (strain SP-6)).